A 735-amino-acid polypeptide reads, in one-letter code: Probable E3 ubiquitin-protein ligase MID2 (735 aa).

An RING-type zinc finger spans residues 30-80 (CPICLELFEDPLLLPCAHSLCFSCAHRILVSSCSSGESIEPITAFQCPTCR). Residues 137 to 184 (IACQFCEQDPPRDAVKTCITCEVSYCDRCLRATHPNKKPFTSHRLVEP) form a B box-type 1; degenerate zinc finger. The B box-type 2 zinc finger occupies 190-232 (LRGITCLDHENEKVNMYCVSDDQLICALCKLVGRHRDHQVASL). Zn(2+) is bound by residues cysteine 195, histidine 198, cysteine 218, and histidine 224. Positions 233-301 (NDRFEKLKQT…IIQQRKQMIA (69 aa)) form a coiled coil. The COS domain maps to 340–399 (LKENDQARFLQSAKNIAERVAMATASSQVLIPDINFNDAFENFALDFSREKKLLEGLDYL). Positions 398–531 (YLTAPNPPSI…RNSEPTRLKT (134 aa)) constitute a Fibronectin type-III domain. The B30.2/SPRY domain occupies 516–709 (INQAGSRNSE…ILSGLPAPDF (194 aa)).

This sequence belongs to the TRIM/RBCC family. Homodimer or heterodimer with MID1. Interacts with IGBP1. Phosphorylated on serine and threonine residues. Low level in fetal kidney and lung, and in adult prostate, ovary and small intestine.

It localises to the cytoplasm. The protein resides in the cytoskeleton. The enzyme catalyses S-ubiquitinyl-[E2 ubiquitin-conjugating enzyme]-L-cysteine + [acceptor protein]-L-lysine = [E2 ubiquitin-conjugating enzyme]-L-cysteine + N(6)-ubiquitinyl-[acceptor protein]-L-lysine.. It participates in protein modification; protein ubiquitination. In terms of biological role, E3 ubiquitin ligase that plays a role in microtubule stabilization. Mediates the 'Lys-48'-linked polyubiquitination of LRRK2 to drive its localization to microtubules and its proteasomal degradation in neurons. This ubiquitination inhibits LRRK2 kinase activation by RAB29. In Homo sapiens (Human), this protein is Probable E3 ubiquitin-protein ligase MID2 (MID2).